We begin with the raw amino-acid sequence, 625 residues long: Tyrosine-protein kinase ITK/TSK (625 aa).

A PH domain is found at 4–117; that stretch reads FILLEEQLIK…WVLTLKEETR (114 aa). A Btk-type zinc finger spans residues 119-155; sequence NNSLVSKYHPNFWMDGRWRCCSQLEKPAVGCAPYDPS. 4 residues coordinate Zn(2+): His127, Cys138, Cys139, and Cys149. Positions 153-174 are disordered; the sequence is DPSKNASKKPLPPTPEDNRRSF. In terms of domain architecture, SH3 spans 177–237; the sequence is PEETLVIALY…PSSYLVEKSP (61 aa). A Phosphotyrosine; by autocatalysis modification is found at Tyr186. One can recognise an SH2 domain in the interval 245–343; it reads WYNKSISRDK…GLVTRLRYPV (99 aa). Residues 368 to 620 form the Protein kinase domain; sequence LTFVQEIGSG…SQLLSQLAEI (253 aa). Residues 374 to 382 and Lys396 each bind ATP; that span reads IGSGQFGLV. The active-site Proton acceptor is Asp487. Phosphotyrosine; by LCK is present on Tyr517. Residue Ser570 is modified to Phosphoserine.

It belongs to the protein kinase superfamily. Tyr protein kinase family. TEC subfamily. Homooligomerizes; this association negatively regulates kinase activity. Interacts with PPIA/CYPA; this interaction regulates TCR signal strength via a proline-directed conformational switch in ITK. Interacts with THEMIS. Interacts with FASLG. Interacts with VAV1; this interaction is important for VAV1 localization and TCR-induced actin polarization. Interacts with TBX21. It depends on Zn(2+) as a cofactor. Phosphorylated at Tyr-517 in the activation loop of the kinase domain by LCK. Subsequent autophosphorylation at Tyr-186 leads to the kinase activation. The autophosphorylated Tyr-186 lies within the substrate binding sequence of the SH3 domain. In terms of processing, ubiquitinated. In terms of tissue distribution, is detected in the thymus, lymph node and very faintly in the spleen, but is not detected in the liver, lung, kidney, heart, brain, intestine or testis. Expressed in T-lymphocytes and mast cells. It may also be expressed in natural killer cells.

It is found in the cytoplasm. Its subcellular location is the nucleus. The catalysed reaction is L-tyrosyl-[protein] + ATP = O-phospho-L-tyrosyl-[protein] + ADP + H(+). Its function is as follows. Tyrosine kinase that plays an essential role in regulation of the adaptive immune response. Regulates the development, function and differentiation of conventional T-cells and nonconventional NKT-cells. When antigen presenting cells (APC) activate T-cell receptor (TCR), a series of phosphorylation lead to the recruitment of ITK to the cell membrane, in the vicinity of the stimulated TCR receptor, where it is phosphorylated by LCK. Phosphorylation leads to ITK autophosphorylation and full activation. Once activated, phosphorylates PLCG1, leading to the activation of this lipase and subsequent cleavage of its substrates. In turn, the endoplasmic reticulum releases calcium in the cytoplasm and the nuclear activator of activated T-cells (NFAT) translocates into the nucleus to perform its transcriptional duty. Phosphorylates 2 essential adapter proteins: the linker for activation of T-cells/LAT protein and LCP2. Then, a large number of signaling molecules such as VAV1 are recruited and ultimately lead to lymphokine production, T-cell proliferation and differentiation. Required for TCR-mediated calcium response in gamma-delta T-cells, may also be involved in the modulation of the transcriptomic signature in the Vgamma2-positive subset of immature gamma-delta T-cells. Phosphorylates TBX21 at 'Tyr-525' and mediates its interaction with GATA3. In Mus musculus (Mouse), this protein is Tyrosine-protein kinase ITK/TSK (Itk).